Here is a 90-residue protein sequence, read N- to C-terminus: Putative membrane protein insertion efficiency factor (90 aa).

It belongs to the UPF0161 family.

The protein localises to the cell membrane. Could be involved in insertion of integral membrane proteins into the membrane. The sequence is that of Putative membrane protein insertion efficiency factor from Lactococcus lactis subsp. cremoris (strain MG1363).